Consider the following 189-residue polypeptide: NADH-quinone oxidoreductase subunit B (189 aa).

Residues C39, C40, C104, and C135 each coordinate [4Fe-4S] cluster.

The protein belongs to the complex I 20 kDa subunit family. In terms of assembly, NDH-1 is composed of 14 different subunits. Subunits NuoB, C, D, E, F, and G constitute the peripheral sector of the complex. It depends on [4Fe-4S] cluster as a cofactor.

Its subcellular location is the cell inner membrane. It catalyses the reaction a quinone + NADH + 5 H(+)(in) = a quinol + NAD(+) + 4 H(+)(out). NDH-1 shuttles electrons from NADH, via FMN and iron-sulfur (Fe-S) centers, to quinones in the respiratory chain. The immediate electron acceptor for the enzyme in this species is believed to be a menaquinone. Couples the redox reaction to proton translocation (for every two electrons transferred, four hydrogen ions are translocated across the cytoplasmic membrane), and thus conserves the redox energy in a proton gradient. The chain is NADH-quinone oxidoreductase subunit B from Chlorobium phaeovibrioides (strain DSM 265 / 1930) (Prosthecochloris vibrioformis (strain DSM 265)).